Reading from the N-terminus, the 295-residue chain is Probable aspartoacylase (295 aa).

Residues His-16 and Glu-19 each contribute to the Zn(2+) site. Substrate is bound by residues Arg-58 and 65 to 66 (NR). His-107 is a binding site for Zn(2+). Positions 166 and 277 each coordinate substrate.

The protein belongs to the AspA/AstE family. Aspartoacylase subfamily. The cofactor is Zn(2+).

It carries out the reaction an N-acyl-L-aspartate + H2O = a carboxylate + L-aspartate. This Acaryochloris marina (strain MBIC 11017) protein is Probable aspartoacylase.